Here is a 78-residue protein sequence, read N- to C-terminus: D-alanyl carrier protein (78 aa).

Residues 1–78 (MEFREQVLDL…KIVEALEELK (78 aa)) enclose the Carrier domain. O-(pantetheine 4'-phosphoryl)serine is present on Ser-36.

The protein belongs to the DltC family. Post-translationally, 4'-phosphopantetheine is transferred from CoA to a specific serine of apo-DCP.

The protein resides in the cytoplasm. It participates in cell wall biogenesis; lipoteichoic acid biosynthesis. Its function is as follows. Carrier protein involved in the D-alanylation of lipoteichoic acid (LTA). The loading of thioester-linked D-alanine onto DltC is catalyzed by D-alanine--D-alanyl carrier protein ligase DltA. The DltC-carried D-alanyl group is further transferred to cell membrane phosphatidylglycerol (PG) by forming an ester bond, probably catalyzed by DltD. D-alanylation of LTA plays an important role in modulating the properties of the cell wall in Gram-positive bacteria, influencing the net charge of the cell wall. The sequence is that of D-alanyl carrier protein from Staphylococcus carnosus (strain TM300).